Here is a 699-residue protein sequence, read N- to C-terminus: Polyribonucleotide nucleotidyltransferase (699 aa).

Residues D485 and D491 each coordinate Mg(2+). Residues 552–611 (PRITTIKINPEKIRDVIGKGGAVIRALTEETGTTIELEDDGTVKIASNNGDATREAIRRI) form the KH domain. The S1 motif domain maps to 621-689 (GRLYTGKVIR…RQGRVRLSIK (69 aa)).

It belongs to the polyribonucleotide nucleotidyltransferase family. As to quaternary structure, component of the RNA degradosome, which is a multiprotein complex involved in RNA processing and mRNA degradation. Mg(2+) is required as a cofactor.

The protein localises to the cytoplasm. The enzyme catalyses RNA(n+1) + phosphate = RNA(n) + a ribonucleoside 5'-diphosphate. Involved in mRNA degradation. Catalyzes the phosphorolysis of single-stranded polyribonucleotides processively in the 3'- to 5'-direction. This Shewanella amazonensis (strain ATCC BAA-1098 / SB2B) protein is Polyribonucleotide nucleotidyltransferase.